The following is a 469-amino-acid chain: Citrate synthase, mitochondrial (469 aa).

The transit peptide at 1-33 (MAPVMRLGSAALRSSIHLTSRQTAFTAARCYSS) directs the protein to the mitochondrion. His-352 is a catalytic residue.

This sequence belongs to the citrate synthase family.

Its subcellular location is the mitochondrion matrix. The enzyme catalyses oxaloacetate + acetyl-CoA + H2O = citrate + CoA + H(+). The protein operates within carbohydrate metabolism; tricarboxylic acid cycle; isocitrate from oxaloacetate: step 1/2. The protein is Citrate synthase, mitochondrial (cit-1) of Neurospora crassa (strain ATCC 24698 / 74-OR23-1A / CBS 708.71 / DSM 1257 / FGSC 987).